Consider the following 357-residue polypeptide: Geranylgeranyl pyrophosphate synthase, chloroplastic (357 aa).

Residues Met-1–Thr-40 constitute a chloroplast transit peptide. Residues Lys-106, Arg-109, and His-138 each coordinate isopentenyl diphosphate. Mg(2+)-binding residues include Asp-145 and Asp-151. Residue Arg-156 participates in dimethylallyl diphosphate binding. Arg-157 serves as a coordination point for isopentenyl diphosphate. Dimethylallyl diphosphate contacts are provided by Lys-242, Thr-243, Gln-280, Lys-297, and Lys-307.

Belongs to the FPP/GGPP synthase family. Requires Mg(2+) as cofactor.

Its subcellular location is the plastid. It is found in the chloroplast. It carries out the reaction isopentenyl diphosphate + dimethylallyl diphosphate = (2E)-geranyl diphosphate + diphosphate. It catalyses the reaction isopentenyl diphosphate + (2E)-geranyl diphosphate = (2E,6E)-farnesyl diphosphate + diphosphate. The enzyme catalyses isopentenyl diphosphate + (2E,6E)-farnesyl diphosphate = (2E,6E,10E)-geranylgeranyl diphosphate + diphosphate. It participates in isoprenoid biosynthesis; farnesyl diphosphate biosynthesis; farnesyl diphosphate from geranyl diphosphate and isopentenyl diphosphate: step 1/1. The protein operates within isoprenoid biosynthesis; geranyl diphosphate biosynthesis; geranyl diphosphate from dimethylallyl diphosphate and isopentenyl diphosphate: step 1/1. Its pathway is isoprenoid biosynthesis; geranylgeranyl diphosphate biosynthesis; geranylgeranyl diphosphate from farnesyl diphosphate and isopentenyl diphosphate: step 1/1. Its function is as follows. Catalyzes the trans-addition of the three molecules of IPP onto DMAPP to form geranylgeranyl pyrophosphate. The sequence is that of Geranylgeranyl pyrophosphate synthase, chloroplastic (GGPS1) from Catharanthus roseus (Madagascar periwinkle).